A 236-amino-acid polypeptide reads, in one-letter code: MTRRYWNINLEEMMEAGVHFGHGTRKWNPRMSPYISAKCKGIHIINLTRTARFLSEACDLVFDASSRGKQFLIVGTKNKAADSVARAAIRARCHYVNKKWLGGMLTNWSTTETRLHKFRDLRMEQTAGRLARLPKRDAAVVKRQLSHLQTYLGGIKYMTGLPDIVIIVDQQEEYTALRECITLGIPTICLIDTNCNPDLADISIPANDDAIASIRLILTKLVFAICEGRSSYIRNP.

As to quaternary structure, component of the chloroplast small ribosomal subunit (SSU). Mature 70S chloroplast ribosomes of higher plants consist of a small (30S) and a large (50S) subunit. The 30S small subunit contains 1 molecule of ribosomal RNA (16S rRNA) and 24 different proteins. The 50S large subunit contains 3 rRNA molecules (23S, 5S and 4.5S rRNA) and 33 different proteins.

It is found in the plastid. The protein resides in the chloroplast. Functionally, component of the chloroplast ribosome (chloro-ribosome), a dedicated translation machinery responsible for the synthesis of chloroplast genome-encoded proteins, including proteins of the transcription and translation machinery and components of the photosynthetic apparatus. This is Small ribosomal subunit protein uS2c (rps2) from Spinacia oleracea (Spinach).